We begin with the raw amino-acid sequence, 334 residues long: Protein-methionine-sulfoxide reductase catalytic subunit MsrP (334 aa).

The segment at residues 1-44 (MKKNQFLKESDVTAESVFFMKRRQVLKALGISAAALSLPHAAHA) is a signal peptide (tat-type signal). Mo-molybdopterin is bound by residues Asn88, 91–92 (YE), Cys146, Thr181, Asn233, Arg238, and 249–251 (GIK).

Belongs to the MsrP family. Heterodimer of a catalytic subunit (MsrP) and a heme-binding subunit (MsrQ). It depends on Mo-molybdopterin as a cofactor. Predicted to be exported by the Tat system. The position of the signal peptide cleavage has not been experimentally proven.

It localises to the periplasm. It catalyses the reaction L-methionyl-[protein] + a quinone + H2O = L-methionyl-(S)-S-oxide-[protein] + a quinol. It carries out the reaction L-methionyl-[protein] + a quinone + H2O = L-methionyl-(R)-S-oxide-[protein] + a quinol. Functionally, part of the MsrPQ system that repairs oxidized periplasmic proteins containing methionine sulfoxide residues (Met-O), using respiratory chain electrons. Thus protects these proteins from oxidative-stress damage caused by reactive species of oxygen and chlorine generated by the host defense mechanisms. MsrPQ is essential for the maintenance of envelope integrity under bleach stress, rescuing a wide series of structurally unrelated periplasmic proteins from methionine oxidation, including the primary periplasmic chaperone SurA and the lipoprotein Pal. The catalytic subunit MsrP is non-stereospecific, being able to reduce both (R-) and (S-) diastereoisomers of methionine sulfoxide. This Escherichia coli O127:H6 (strain E2348/69 / EPEC) protein is Protein-methionine-sulfoxide reductase catalytic subunit MsrP.